Consider the following 588-residue polypeptide: Snake venom 5'-nucleotidase (588 aa).

An N-terminal signal peptide occupies residues 1–40 (MQTPKRRRGAQGCPRSSPSPPLLLLVRAVWFCAALSVAAG). Residues Asp-51 and His-53 each contribute to the Zn(2+) site. An intrachain disulfide couples Cys-66 to Cys-71. The Zn(2+) site is built by Asp-99 and Asn-131. Asn-167 carries N-linked (GlcNAc...) asparagine glycosylation. Zn(2+) contacts are provided by His-234 and His-257. N-linked (GlcNAc...) asparagine glycans are attached at residues Asn-347 and Asn-361. 2 disulfides stabilise this stretch: Cys-367–Cys-372 and Cys-379–Cys-401. Arg-368 contacts AMP. Positions 404 and 409 each coordinate AMP. N-linked (GlcNAc...) asparagine glycosylation occurs at Asn-418. Position 432 (Phe-432) interacts with AMP. Cys-491 and Cys-494 are joined by a disulfide. AMP-binding residues include Phe-515 and Asp-521. Asn-532 carries an N-linked (GlcNAc...) asparagine glycan. Ser-564 is lipidated: GPI-anchor amidated serine. A propeptide spans 565–588 (AGTLFQAQLFLTWGLCVSLLYFIL) (removed in mature form).

It belongs to the 5'-nucleotidase family. It depends on Zn(2+) as a cofactor. In terms of processing, venom 5'-nucleotidases (or a part thereof) may be released into the venom via exosome-like vesicles. They may be attached via a GPI anchor to the membrane of these vesicles. Soluble forms of 5'-nucleotidase might be released by cleavage of the ectodomain in the exosome-like vesicles or venom gland cells. As to expression, expressed by the venom gland.

It localises to the membrane. The enzyme catalyses a ribonucleoside 5'-phosphate + H2O = a ribonucleoside + phosphate. Its function is as follows. Hydrolyzes nucleotides into nucleosides. Snake venom 5'-nucleotidases are widely distributed among venomous snake taxa, but there is a lack of information about their biological activities. They have been shown to inhibit platelet aggregation. This effect may be due to the liberation of inhibitory AMP or adenosine by its action on ADP released upon initiation of aggregation. Venom 5'-nucleotidases are also known to synergistically act in vivo with other toxins like ADPases, phospholipases, and disintegrins to exert a more pronounced anti-coagulant effect. The chain is Snake venom 5'-nucleotidase from Crotalus adamanteus (Eastern diamondback rattlesnake).